Here is an 875-residue protein sequence, read N- to C-terminus: MPHSNTLIVPSTNPFDDPSSIKNGLNNLTSSELVNQMKKESLAASVKTPSTPPKECSHLKKGVKLSHLKGNARALRDPSKHLCFICTTEKIKREDYELTLCANCGYLFCCNHESDHSRKHFEKNKKHCVFVNIITLKCHCYSCDADIVIFDKKNLVVRDVQQFICSNLVSSLTKAPNVLKSNSSHFKKEKKSKHSSGKSSKKYKVISPGLKNLGATCFFNSTLQVLCACEALHDVISPFQYSHSSVIVRKLTKSPESSLLSAFIKFLETFYKSDGTISVYRPTTFFGEFRRLHPQFSESVQQDAHELLRLLLDDLISEEFRVLRFNLNSVSRSLQLSPCLTDDEQLSKSLTSFKQVNVTDASLSPNSHNTSDNEQNNEDYVSVSSLVGSETEDITYSKELSQSSDSSQHQHDSFLPANSSPLAASSTKSLPSSELLDSSSDKGQQVFKGQHEVAGTNSFEDPNSHFNVSNSSNHEEASPKKEVLKSPQFQRRSLDILRLGELSSDDMMLDKATMDEFSSSLVIKSIFTGRLTSVVMCQSCNEITNTPEPIQDLSIPIHYPSSRVSRRHRFHRALRSRFSRSPKKSSVKIVVDNANDDTDQAPTTNSSSLNENLLGGHASENDKSLKQSPFQKLTRRLSDLSVNSSGQISKQDFDNSNSIFSESSLSSPIIEEPKTLIDCLKNFTHVEELSGENMFACENCCNQPNEVGSPAKGGLTSDNDKYSFNNSVYRNAYKRMLLDDPLPPVFIIHLKRFFQEISHDGYANPKKISDFIEFEQELDLNEFVMPHLRASSSFRYRLFGVIVHSGTLNYGHYVAYVLSHKFLDLSAPSTNSKDFRSEAGIPERRWLYISDNIVRESSWDEVSKVEAYMLFYERV.

A UBP-type zinc finger spans residues 54–167 (KECSHLKKGV…RDVQQFICSN (114 aa)). The Zn(2+) site is built by C56, H58, C83, C86, C101, C104, C109, H116, H120, H127, C140, and C143. The 668-residue stretch at 208-875 (PGLKNLGATC…EAYMLFYERV (668 aa)) folds into the USP domain. Catalysis depends on C217, which acts as the Nucleophile. Phosphoserine occurs at positions 333 and 337. The segment at 396 to 486 (YSKELSQSSD…ASPKKEVLKS (91 aa)) is disordered. Residues 401–438 (SQSSDSSQHQHDSFLPANSSPLAASSTKSLPSSELLDS) are compositionally biased toward low complexity. The span at 473-484 (NHEEASPKKEVL) shows a compositional bias: basic and acidic residues. Phosphoserine is present on residues S486 and S493. Residues 575-586 (RSRFSRSPKKSS) show a composition bias toward basic residues. The segment at 575-628 (RSRFSRSPKKSSVKIVVDNANDDTDQAPTTNSSSLNENLLGGHASENDKSLKQS) is disordered. Positions 600-611 (QAPTTNSSSLNE) are enriched in polar residues. At S645 the chain carries Phosphoserine. Residue H812 is the Proton acceptor of the active site.

This sequence belongs to the peptidase C19 family.

It catalyses the reaction Thiol-dependent hydrolysis of ester, thioester, amide, peptide and isopeptide bonds formed by the C-terminal Gly of ubiquitin (a 76-residue protein attached to proteins as an intracellular targeting signal).. The polypeptide is Probable ubiquitin carboxyl-terminal hydrolase 7 (ubp7) (Schizosaccharomyces pombe (strain 972 / ATCC 24843) (Fission yeast)).